The following is a 115-amino-acid chain: uncharacterized protein (115 aa).

This is an uncharacterized protein from Schizosaccharomyces pombe (strain 972 / ATCC 24843) (Fission yeast).